Reading from the N-terminus, the 597-residue chain is Probable HECT-type ubiquitin ligase-interacting protein creD (597 aa).

2 disordered regions span residues 375-398 and 432-499; these read ELDP…GTLS and LNIT…MATP. Residues 443–455 show a composition bias toward basic and acidic residues; sequence TDHESQNDSEHRR. Low complexity predominate over residues 465–481; that stretch reads PSSGSNSHSPSSPVLSR. Residues 482–492 show a composition bias toward basic and acidic residues; that stretch reads RPSDEVDHEHV.

The protein belongs to the arrestin family. As to quaternary structure, interacts with hulA.

Functionally, component of the regulatory network controlling carbon source utilization through ubiquitination and deubiquitination involving creA, creB, creC, creD and acrB. May be involved in signaling by recognizing appropriately phosphorylated substrates via its arrestin domains and then recruit a HECT-type ubiquitin ligase such as hulA, leading to ubiquitination of the substrate, providing a link between ubiquitination and phosphorylation in protein regulation and stability. The protein is Probable HECT-type ubiquitin ligase-interacting protein creD (creD) of Aspergillus oryzae (strain ATCC 42149 / RIB 40) (Yellow koji mold).